Reading from the N-terminus, the 503-residue chain is Palmitoleoyl-protein carboxylesterase NOTUM (503 aa).

The signal sequence occupies residues 1–19 (MGGEVRVLLLLGLLHWVGG). The disordered stretch occupies residues 23–53 (RKTWRRRGQQPPQPPPPPPLPQRAEVEPGAG). The segment covering 33–43 (PPQPPPPPPLP) has biased composition (pro residues). Ser-88 is subject to Phosphoserine. N-linked (GlcNAc...) asparagine glycosylation is present at Asn-103. Catalysis depends on charge relay system residues Ser-239, Asp-347, and His-396.

It belongs to the pectinacetylesterase family. Notum subfamily. As to expression, widely expressed. Expressed in lung, ovary, kidney, liver and brain. Not detected in thymus, heart, spleen, stomach, skeletal muscle and bone marrow.

Its subcellular location is the secreted. It carries out the reaction [Wnt protein]-O-(9Z)-hexadecenoyl-L-serine + H2O = [Wnt protein]-L-serine + (9Z)-hexadecenoate + H(+). In terms of biological role, carboxylesterase that acts as a key negative regulator of the Wnt signaling pathway by specifically mediating depalmitoleoylation of WNT proteins. Serine palmitoleoylation of WNT proteins is required for efficient binding to frizzled receptors. This chain is Palmitoleoyl-protein carboxylesterase NOTUM, found in Mus musculus (Mouse).